A 584-amino-acid chain; its full sequence is Zinc finger and BTB domain-containing protein 7A (584 aa).

One can recognise a BTB domain in the interval 34 to 101; sequence CDVVILVEGR…AYTATLTVST (68 aa). The disordered stretch occupies residues 220-313; sequence YGPGPPAERP…EDGDGPDVDG (94 aa). Residues 277-584 form a mediates interaction with KHDRBS1 region; the sequence is EEEAASLSEA…TDGNFTAGLA (308 aa). A compositionally biased stretch (low complexity) spans 281–290; the sequence is ASLSEAAPEP. A phosphoserine mark is found at serine 337 and serine 341. The tract at residues 349 to 584 is mediates interaction with RELA; sequence MDYYLKYFSG…TDGNFTAGLA (236 aa). Residues 377–584 form a mediates interaction with SMAD4 region; sequence RAKAFQKCPI…TDGNFTAGLA (208 aa). 2 C2H2-type zinc fingers span residues 382-404 and 410-432; these read QKCP…IRTH and YECN…MRKH. A Glycyl lysine isopeptide (Lys-Gly) (interchain with G-Cter in SUMO2) cross-link involves residue lysine 436. The C2H2-type 3 zinc-finger motif lies at 438–460; it reads YLCQQCGAAFAHNYDLKNHMRVH. The segment at 466-490 adopts a C2H2-type 4; atypical zinc-finger fold; that stretch reads YQCDSCCKTFVRSDHLHRHLKKDGC. The disordered stretch occupies residues 486–584; it reads KKDGCNGVPS…TDGNFTAGLA (99 aa). Over residues 505-527 the composition is skewed to low complexity; it reads GGAPDPSPGATATPGAPAQPSSP. 3 positions are modified to phosphoserine: serine 511, serine 525, and serine 526. The segment covering 528–540 has biased composition (basic and acidic residues); the sequence is DARRNGQEKHFKD. Residue lysine 539 forms a Glycyl lysine isopeptide (Lys-Gly) (interchain with G-Cter in SUMO2) linkage. The residue at position 549 (serine 549) is a Phosphoserine. The segment covering 560-572 has biased composition (gly residues); the sequence is GAGGGGDSGGGPG.

As to quaternary structure, homodimer. Interacts with BCL6. Interacts with RELA; involved in the control by RELA of the accessibility of target gene promoters. Interacts with AR (via NR LBD domain); the interaction is direct and androgen-dependent. Interacts with NCOR1. Interacts with NCOR2. Interacts with SMAD4; the interaction is direct and stimulated by TGFB1. Interacts with HDAC1. Interacts with SP1; ZBTB7A prevents the binding to GC-rich motifs in promoters and represses the transcriptional activity of SP1. Interacts with the DNA-dependent protein kinase complex/DNA-PKc. Interacts with KHDRBS1; negatively regulates KHDRBS1 splicing activity. Post-translationally, sumoylated. Undergoes sumoylation with SUMO1 that may regulate its transcriptional activity. Widely expressed. In normal thymus, expressed in medullary epithelial cells and Hassle's corpuscles (at protein level). In tonsil, expressed in squamous epithelium and germinal center lymphocytes (at protein level). Up-regulated in a subset of lymphomas, as well as in a subset of breast, lung, colon, prostate and bladder carcinomas (at protein level). Expressed in adipose tissues.

It is found in the nucleus. Functionally, transcription factor that represses the transcription of a wide range of genes involved in cell proliferation and differentiation. Directly and specifically binds to the consensus sequence 5'-[GA][CA]GACCCCCCCCC-3' and represses transcription both by regulating the organization of chromatin and through the direct recruitment of transcription factors to gene regulatory regions. Negatively regulates SMAD4 transcriptional activity in the TGF-beta signaling pathway through these two mechanisms. That is, recruits the chromatin regulator HDAC1 to the SMAD4-DNA complex and in parallel prevents the recruitment of the transcriptional activators CREBBP and EP300. Collaborates with transcription factors like RELA to modify the accessibility of gene transcription regulatory regions to secondary transcription factors. Also directly interacts with transcription factors like SP1 to prevent their binding to DNA. Functions as an androgen receptor/AR transcriptional corepressor by recruiting NCOR1 and NCOR2 to the androgen response elements/ARE on target genes. Thereby, negatively regulates androgen receptor signaling and androgen-induced cell proliferation. Involved in the switch between fetal and adult globin expression during erythroid cells maturation. Through its interaction with the NuRD complex regulates chromatin at the fetal globin genes to repress their transcription. Specifically represses the transcription of the tumor suppressor ARF isoform from the CDKN2A gene. Efficiently abrogates E2F1-dependent CDKN2A transactivation. Regulates chondrogenesis through the transcriptional repression of specific genes via a mechanism that also requires histone deacetylation. Regulates cell proliferation through the transcriptional regulation of genes involved in glycolysis. Involved in adipogenesis through the regulation of genes involved in adipocyte differentiation. Plays a key role in the differentiation of lymphoid progenitors into B and T lineages. Promotes differentiation towards the B lineage by inhibiting the T-cell instructive Notch signaling pathway through the specific transcriptional repression of Notch downstream target genes. Also regulates osteoclast differentiation. May also play a role, independently of its transcriptional activity, in double-strand break repair via classical non-homologous end joining/cNHEJ. Recruited to double-strand break sites on damage DNA, interacts with the DNA-dependent protein kinase complex and directly regulates its stability and activity in DNA repair. May also modulate the splicing activity of KHDRBS1 toward BCL2L1 in a mechanism which is histone deacetylase-dependent and thereby negatively regulates the pro-apoptotic effect of KHDRBS1. The protein is Zinc finger and BTB domain-containing protein 7A of Homo sapiens (Human).